Reading from the N-terminus, the 201-residue chain is ATP-dependent Clp protease proteolytic subunit (201 aa).

Catalysis depends on Ser98, which acts as the Nucleophile. His123 is a catalytic residue.

Belongs to the peptidase S14 family. In terms of assembly, fourteen ClpP subunits assemble into 2 heptameric rings which stack back to back to give a disk-like structure with a central cavity, resembling the structure of eukaryotic proteasomes.

It localises to the cytoplasm. The catalysed reaction is Hydrolysis of proteins to small peptides in the presence of ATP and magnesium. alpha-casein is the usual test substrate. In the absence of ATP, only oligopeptides shorter than five residues are hydrolyzed (such as succinyl-Leu-Tyr-|-NHMec, and Leu-Tyr-Leu-|-Tyr-Trp, in which cleavage of the -Tyr-|-Leu- and -Tyr-|-Trp bonds also occurs).. In terms of biological role, cleaves peptides in various proteins in a process that requires ATP hydrolysis. Has a chymotrypsin-like activity. Plays a major role in the degradation of misfolded proteins. In Rickettsia akari (strain Hartford), this protein is ATP-dependent Clp protease proteolytic subunit.